We begin with the raw amino-acid sequence, 260 residues long: Proliferating cell nuclear antigen (260 aa).

A DNA-binding region spans residues 61-80 (RCDRNLSMGMNLGSMAKILK).

It belongs to the PCNA family. Homotrimer. Forms a complex with activator 1 heteropentamer in the presence of ATP. Interacts with E2f. Interacts with the catalytic subunits of two DNA polymerase complexes: PolD1 from the delta complex and PolE1/DNApol-epsilon255 from the epsilon complex. In terms of tissue distribution, expressed at high levels in adult ovary.

It localises to the nucleus. The protein resides in the chromosome. Its subcellular location is the cytoplasm. In terms of biological role, likely to be an auxiliary protein of DNA polymerase delta complex and is probably involved in the control of DNA replication and repair by increasing the polymerase's processibility. This is Proliferating cell nuclear antigen from Drosophila melanogaster (Fruit fly).